The primary structure comprises 503 residues: GMP synthase [glutamine-hydrolyzing] (503 aa).

Positions 1–189 (MVLVLDFGSQ…FLELAGVKRD (189 aa)) constitute a Glutamine amidotransferase type-1 domain. Residue cysteine 78 is the Nucleophile of the active site. Residues histidine 164 and glutamate 166 contribute to the active site. The GMPS ATP-PPase domain occupies 190 to 378 (WTPEHVLEEL…LGLPDTLRLR (189 aa)). ATP is bound at residue 217 to 223 (SGGVDSS).

In terms of assembly, homodimer.

The catalysed reaction is XMP + L-glutamine + ATP + H2O = GMP + L-glutamate + AMP + diphosphate + 2 H(+). The protein operates within purine metabolism; GMP biosynthesis; GMP from XMP (L-Gln route): step 1/1. In terms of biological role, catalyzes the synthesis of GMP from XMP. The sequence is that of GMP synthase [glutamine-hydrolyzing] from Thermus thermophilus (strain ATCC 27634 / DSM 579 / HB8).